Here is a 161-residue protein sequence, read N- to C-terminus: ATP synthase subunit b' (161 aa).

The chain crosses the membrane as a helical span at residues 30 to 47 (VMAIQFLVLAALLNKLFY).

This sequence belongs to the ATPase B chain family. In terms of assembly, F-type ATPases have 2 components, F(1) - the catalytic core - and F(0) - the membrane proton channel. F(1) has five subunits: alpha(3), beta(3), gamma(1), delta(1), epsilon(1). F(0) has four main subunits: a(1), b(1), b'(1) and c(10-14). The alpha and beta chains form an alternating ring which encloses part of the gamma chain. F(1) is attached to F(0) by a central stalk formed by the gamma and epsilon chains, while a peripheral stalk is formed by the delta, b and b' chains.

The protein resides in the cellular thylakoid membrane. Its function is as follows. F(1)F(0) ATP synthase produces ATP from ADP in the presence of a proton or sodium gradient. F-type ATPases consist of two structural domains, F(1) containing the extramembraneous catalytic core and F(0) containing the membrane proton channel, linked together by a central stalk and a peripheral stalk. During catalysis, ATP synthesis in the catalytic domain of F(1) is coupled via a rotary mechanism of the central stalk subunits to proton translocation. Component of the F(0) channel, it forms part of the peripheral stalk, linking F(1) to F(0). The b'-subunit is a diverged and duplicated form of b found in plants and photosynthetic bacteria. The polypeptide is ATP synthase subunit b' (Picosynechococcus sp. (strain ATCC 27264 / PCC 7002 / PR-6) (Agmenellum quadruplicatum)).